A 175-amino-acid polypeptide reads, in one-letter code: Peptide deformylase (175 aa).

Fe cation-binding residues include C99 and H141. E142 is an active-site residue. H145 serves as a coordination point for Fe cation.

Belongs to the polypeptide deformylase family. Fe(2+) is required as a cofactor.

The enzyme catalyses N-terminal N-formyl-L-methionyl-[peptide] + H2O = N-terminal L-methionyl-[peptide] + formate. Its function is as follows. Removes the formyl group from the N-terminal Met of newly synthesized proteins. Requires at least a dipeptide for an efficient rate of reaction. N-terminal L-methionine is a prerequisite for activity but the enzyme has broad specificity at other positions. This is Peptide deformylase from Rickettsia canadensis (strain McKiel).